We begin with the raw amino-acid sequence, 545 residues long: Cytochrome P450 monooxygenase 212 (545 aa).

The first 14 residues, 1 to 14, serve as a signal peptide directing secretion; it reads MAAYAWLYCALALG. Cys-486 lines the heme pocket.

Belongs to the cytochrome P450 family. Requires heme as cofactor.

It participates in secondary metabolite biosynthesis. Cytochrome P450 monooxygenase that is able to use anthracene and pyrene as substrates for oxidation. The polypeptide is Cytochrome P450 monooxygenase 212 (Postia placenta (strain ATCC 44394 / Madison 698-R) (Brown rot fungus)).